Reading from the N-terminus, the 361-residue chain is Phosphoserine aminotransferase (361 aa).

Arg43 lines the L-glutamate pocket. Pyridoxal 5'-phosphate is bound by residues 77–78, Trp103, Thr153, Asp173, and Gln196; that span reads AS. Lys197 bears the N6-(pyridoxal phosphate)lysine mark. 238–239 provides a ligand contact to pyridoxal 5'-phosphate; it reads NT.

The protein belongs to the class-V pyridoxal-phosphate-dependent aminotransferase family. SerC subfamily. In terms of assembly, homodimer. Requires pyridoxal 5'-phosphate as cofactor.

The protein resides in the cytoplasm. The catalysed reaction is O-phospho-L-serine + 2-oxoglutarate = 3-phosphooxypyruvate + L-glutamate. It carries out the reaction 4-(phosphooxy)-L-threonine + 2-oxoglutarate = (R)-3-hydroxy-2-oxo-4-phosphooxybutanoate + L-glutamate. Its pathway is amino-acid biosynthesis; L-serine biosynthesis; L-serine from 3-phospho-D-glycerate: step 2/3. It participates in cofactor biosynthesis; pyridoxine 5'-phosphate biosynthesis; pyridoxine 5'-phosphate from D-erythrose 4-phosphate: step 3/5. In terms of biological role, catalyzes the reversible conversion of 3-phosphohydroxypyruvate to phosphoserine and of 3-hydroxy-2-oxo-4-phosphonooxybutanoate to phosphohydroxythreonine. This is Phosphoserine aminotransferase from Stutzerimonas stutzeri (Pseudomonas stutzeri).